The sequence spans 270 residues: Cystinosin homolog (270 aa).

The PQ-loop 1 domain occupies 9–75 (LEISYEIVGW…LYFSPVIQKQ (67 aa)). The helical transmembrane segment at 14–34 (EIVGWIAFASWSISFYPQLIL) threads the bilayer. A glycan (N-linked (GlcNAc...) asparagine) is linked at Asn52. The next 3 helical transmembrane spans lie at 93–113 (VAFS…IFIY), 123–143 (LAIG…FIAL), and 148–168 (WLWL…VKYI). Residues 151–213 (LISIFNSIQV…IQSIDQNSWK (63 aa)) form the PQ-loop 2 domain. An N-linked (GlcNAc...) asparagine glycan is attached at Asn174. The next 2 membrane-spanning stretches (helical) occupy residues 180–200 (TVGW…ANYL) and 223–243 (LLSL…YVLY). The disordered stretch occupies residues 250–270 (KSPETGEESNEPLIDSSHEHV).

This sequence belongs to the cystinosin (TC 2.A.43.1) family.

It localises to the lysosome membrane. In terms of biological role, thought to transport cystine out of lysosomes. The polypeptide is Cystinosin homolog (Arabidopsis thaliana (Mouse-ear cress)).